The sequence spans 556 residues: Arginine--tRNA ligase (556 aa).

Residues 132-142 (ANPTGDLHLGH) carry the 'HIGH' region motif.

Belongs to the class-I aminoacyl-tRNA synthetase family. Monomer.

The protein resides in the cytoplasm. The catalysed reaction is tRNA(Arg) + L-arginine + ATP = L-arginyl-tRNA(Arg) + AMP + diphosphate. The polypeptide is Arginine--tRNA ligase (Listeria monocytogenes serotype 4a (strain HCC23)).